A 298-amino-acid chain; its full sequence is Inosose dehydratase (298 aa).

Belongs to the IolE/MocC family. Glutathione serves as cofactor. It depends on Co(2+) as a cofactor. Mn(2+) is required as a cofactor.

It catalyses the reaction scyllo-inosose = 3D-3,5/4-trihydroxycyclohexane-1,2-dione + H2O. Its function is as follows. Catalyzes the dehydration of inosose (2-keto-myo-inositol, 2KMI or 2,4,6/3,5-pentahydroxycyclohexanone) to 3D-(3,5/4)-trihydroxycyclohexane-1,2-dione (D-2,3-diketo-4-deoxy-epi-inositol). The polypeptide is Inosose dehydratase (Histophilus somni (strain 129Pt) (Haemophilus somnus)).